Reading from the N-terminus, the 319-residue chain is tRNA uridine(34) hydroxylase (319 aa).

Positions 127–221 (KQEDTVIIDA…YGKDPEVQGE (95 aa)) constitute a Rhodanese domain. The active-site Cysteine persulfide intermediate is the C181.

It belongs to the TrhO family.

The enzyme catalyses uridine(34) in tRNA + AH2 + O2 = 5-hydroxyuridine(34) in tRNA + A + H2O. Catalyzes oxygen-dependent 5-hydroxyuridine (ho5U) modification at position 34 in tRNAs. This is tRNA uridine(34) hydroxylase from Bacillus thuringiensis (strain Al Hakam).